A 204-amino-acid polypeptide reads, in one-letter code: N-(5'-phosphoribosyl)anthranilate isomerase (204 aa).

The protein belongs to the TrpF family.

The catalysed reaction is N-(5-phospho-beta-D-ribosyl)anthranilate = 1-(2-carboxyphenylamino)-1-deoxy-D-ribulose 5-phosphate. Its pathway is amino-acid biosynthesis; L-tryptophan biosynthesis; L-tryptophan from chorismate: step 3/5. This chain is N-(5'-phosphoribosyl)anthranilate isomerase, found in Syntrophomonas wolfei subsp. wolfei (strain DSM 2245B / Goettingen).